The sequence spans 336 residues: Monoacylglycerol lipase ABHD6 (336 aa).

Topologically, residues M1–M8 are extracellular. A helical; Signal-anchor for type II membrane protein membrane pass occupies residues F9–L29. At W30–N336 the chain is on the cytoplasmic side. S148 serves as the catalytic Nucleophile. Residues D278 and H306 each act as charge relay system in the active site.

It belongs to the AB hydrolase superfamily. Widely expressed with higher expression in small intestine, liver and brown adipose tissue. In brain, expressed postsynaptically in cortical neurons but not detected in microglia (at protein level).

Its subcellular location is the late endosome membrane. It is found in the lysosome membrane. The protein resides in the mitochondrion membrane. It catalyses the reaction Hydrolyzes glycerol monoesters of long-chain fatty acids.. The catalysed reaction is 2-(5Z,8Z,11Z,14Z-eicosatetraenoyl)-glycerol + H2O = glycerol + (5Z,8Z,11Z,14Z)-eicosatetraenoate + H(+). The enzyme catalyses 1-octanoylglycerol + H2O = octanoate + glycerol + H(+). It carries out the reaction 1-decanoylglycerol + H2O = decanoate + glycerol + H(+). It catalyses the reaction 1-dodecanoylglycerol + H2O = dodecanoate + glycerol + H(+). The catalysed reaction is 1-tetradecanoylglycerol + H2O = tetradecanoate + glycerol + H(+). The enzyme catalyses 2-hexadecanoylglycerol + H2O = glycerol + hexadecanoate + H(+). It carries out the reaction 2-(9Z-octadecenoyl)-glycerol + H2O = glycerol + (9Z)-octadecenoate + H(+). It catalyses the reaction 1-(9Z-octadecenoyl)-glycerol + H2O = glycerol + (9Z)-octadecenoate + H(+). The catalysed reaction is 2-(9Z,12Z-octadecadienoyl)-glycerol + H2O = (9Z,12Z)-octadecadienoate + glycerol + H(+). The enzyme catalyses 1-(5Z,8Z,11Z,14Z-eicosatetraenoyl)-glycerol + H2O = glycerol + (5Z,8Z,11Z,14Z)-eicosatetraenoate + H(+). It carries out the reaction 1-(9Z,12Z-octadecadienoyl)-glycerol + H2O = (9Z,12Z)-octadecadienoate + glycerol + H(+). It catalyses the reaction 3-(9Z-octadecenoyl)-sn-glycero-1-phospho-(3'-(9Z-octadecenoyl)-1'-sn-glycerol) + H2O = 3-(9Z-octadecenoyl)-sn-glycero-1-phospho-(1'-sn-glycerol) + (9Z)-octadecenoate + H(+). The catalysed reaction is (S,S)-2-(9Z-octadecenoyl)-sn-glycero-1-phospho-(2'-(9Z-octadecenoyl)-1'-sn-glycerol) + H2O = (S,S)-2-(9Z-octadecenoyl)-sn-glycero-1-phospho-(1'-sn-glycerol) + (9Z)-octadecenoate + H(+). The enzyme catalyses (R,R)-2-(9Z-octadecenoyl)-sn-glycero-3-phospho-(2'-(9Z-octadecenoyl)-3'-sn-glycerol) + H2O = (R,R)-2-(9Z-octadecenoyl)-sn-glycero-3-phospho-(3'-sn-glycerol) + (9Z)-octadecenoate + H(+). Functionally, lipase that preferentially hydrolysis medium-chain saturated monoacylglycerols including 2-arachidonoylglycerol. Through 2-arachidonoylglycerol degradation may regulate endocannabinoid signaling pathways. Also has a lysophosphatidyl lipase activity with a preference for lysophosphatidylglycerol among other lysophospholipids. Also able to degrade bis(monoacylglycero)phosphate (BMP) and constitutes the major enzyme for BMP catabolism. BMP, also known as lysobisphosphatidic acid, is enriched in late endosomes and lysosomes and plays a key role in the formation of intraluminal vesicles and in lipid sorting. The sequence is that of Monoacylglycerol lipase ABHD6 from Mus musculus (Mouse).